The following is a 179-amino-acid chain: Dual-action ribosomal maturation protein DarP (179 aa).

It belongs to the DarP family.

The protein localises to the cytoplasm. Functionally, member of a network of 50S ribosomal subunit biogenesis factors which assembles along the 30S-50S interface, preventing incorrect 23S rRNA structures from forming. Promotes peptidyl transferase center (PTC) maturation. The chain is Dual-action ribosomal maturation protein DarP from Aliivibrio fischeri (strain ATCC 700601 / ES114) (Vibrio fischeri).